The sequence spans 239 residues: O-methyltransferase ankF (239 aa).

S-adenosyl-L-methionine contacts are provided by residues Glu-71, 73-74, Ser-79, Glu-98, and Ala-127; that span reads GT.

It belongs to the class I-like SAM-binding methyltransferase superfamily. Cation-dependent O-methyltransferase family.

It carries out the reaction NK13650 B + S-adenosyl-L-methionine = NK13650 D + S-adenosyl-L-homocysteine + H(+). It participates in secondary metabolite biosynthesis. In terms of biological role, O-methyltransferase; part of the ank cluster that mediates the biosynthesis of NK13650 C, a highly modified cyclo-arginine-tyrosine dipeptide. AnkF converts NK13650 B to produce NK13650 D via methylation of the C-17 phenol group. Within the pathway, the cyclodipeptide synthase ankA acts as the scaffold-generating enzyme and is responsible for formation of the cyclo-Arg-Tyr diketopiperazine (cRY) from L-Arg and L-Tyr. The ankA product cRY is desaturated by the cytochrome P450 monooxygenase ankB to yield a dehydro-cyclodipeptide intermediate. The FAD-dependent monooxygenase ankC then installs the m-OH, ankD catalyzes the attachment of L-homoserine, and ankE ligates citrate to the ankD product to yield NK13650 B. The O-methyltransferase ankF is responsible for methylation of the C-17 phenol group of NK13650 B to produce NK13650 D. Amidation of NK13650 D with L-Asp by ankG then leads to the production of NK13650 C, whereas amidation of NK13650 B produces NK13650 A. This chain is O-methyltransferase ankF, found in Aspergillus thermomutatus (Neosartorya pseudofischeri).